A 184-amino-acid chain; its full sequence is ADP-ribosylation factor-like protein 2 (184 aa).

Glycine 2 carries N-myristoyl glycine lipidation. 23-30 (GLDNAGKT) serves as a coordination point for GTP. Phosphoserine is present on serine 45. Residues 66–70 (DVGGQ) and glycine 68 each bind GTP. Lysine 71 participates in a covalent cross-link: Glycyl lysine isopeptide (Lys-Gly) (interchain with G-Cter in ubiquitin). 125–128 (NKQD) is a GTP binding site.

The protein belongs to the small GTPase superfamily. Arf family. Found in a complex with ARL2, ARL2BP and SLC25A6. Found in a complex with at least ARL2, PPP2CB, PPP2R1A, PPP2R2A, PPP2R5E and TBCD. Interacts with ELMOD2. The GTP-bound form interacts with ARL2BP. The GDP-bound form interacts preferentially with TBCD. Interacts with UNC119. Found in a complex with ARL2, ARL2BP and SLC25A4. The GTP-bound form interacts with PDE6D. Post-translationally, not N-myristoylated. Expressed in brain, retina, lung, cerebellum, liver, kidney, hippocampus, spleen, cortex and heart (at protein level).

The protein localises to the mitochondrion intermembrane space. Its subcellular location is the cytoplasm. It is found in the cytoskeleton. The protein resides in the microtubule organizing center. It localises to the centrosome. The protein localises to the nucleus. Functionally, small GTP-binding protein which cycles between an inactive GDP-bound and an active GTP-bound form, and the rate of cycling is regulated by guanine nucleotide exchange factors (GEF) and GTPase-activating proteins (GAP). GTP-binding protein that does not act as an allosteric activator of the cholera toxin catalytic subunit. Regulates formation of new microtubules and centrosome integrity. Prevents the TBCD-induced microtubule destruction. Participates in association with TBCD, in the disassembly of the apical junction complexes. Antagonizes the effect of TBCD on epithelial cell detachment and tight and adherens junctions disassembly. Together with ARL2, plays a role in the nuclear translocation, retention and transcriptional activity of STAT3. Component of a regulated secretory pathway involved in Ca(2+)-dependent release of acetylcholine. Required for normal progress through the cell cycle. This chain is ADP-ribosylation factor-like protein 2 (Arl2), found in Rattus norvegicus (Rat).